Here is a 540-residue protein sequence, read N- to C-terminus: Transcription initiation factor IIF subunit alpha (540 aa).

Residues 1–26 are compositionally biased toward basic and acidic residues; the sequence is MDSQETKVFENVKQENPDEKKPKVEE. 2 disordered regions span residues 1–39 and 70–106; these read MDSQ…QSQQ and IDPS…SSSN. 2 stretches are compositionally biased toward polar residues: residues 29–39 and 89–106; these read SQNNASTQSQQ and APSS…SSSN. 2 positions are modified to phosphoserine: serine 259 and serine 261. The stretch at 280–382 forms a coiled coil; sequence MEGNEEDNKK…REEKLKSRFS (103 aa). Positions 341-416 are disordered; the sequence is YESDEEDEDP…SSQLQSPNTS (76 aa). Acidic residues predominate over residues 359 to 369; the sequence is SEEEVLQEEEE. Over residues 381–416 the composition is skewed to polar residues; the sequence is FSANASKTNTPRPLERTPSSVSPVKASSQLQSPNTS. The residue at position 399 (serine 399) is a Phosphoserine.

The protein belongs to the TFIIF alpha subunit family. In terms of assembly, component of the fcp1/TFIIF/polII complex via interaction of tfg3 with both tfg1/TFIIF-alpha and tfg2/TFIIF-beta subunits.

Its subcellular location is the nucleus. In terms of biological role, TFIIF is a general transcription initiation factor that binds to RNA polymerase II and helps to recruit it to the initiation complex in collaboration with TFIIB. It promotes transcription elongation. The sequence is that of Transcription initiation factor IIF subunit alpha (tfg1) from Schizosaccharomyces pombe (strain 972 / ATCC 24843) (Fission yeast).